The following is a 190-amino-acid chain: High affinity copper uptake protein 1 (190 aa).

Positions 1 to 35 are disordered; it reads MDHSHHMGMSYMDSNSTMQPSHHHPTTSASHSHGG. Topologically, residues 1–61 are extracellular; sequence MDHSHHMGMS…KNVELLFSGL (61 aa). The short motif at 5-6 is the Bis-His motif element; it reads HH. A Methionine segments (Mets) motif motif is present at residues 7–12; it reads MGMSYM. Asparagine 15 is a glycosylation site (N-linked (GlcNAc...) asparagine). The span at 26–35 shows a compositional bias: low complexity; that stretch reads TTSASHSHGG. The O-linked (GalNAc...) threonine glycan is linked to threonine 27. A helical membrane pass occupies residues 62-82; that stretch reads VINTAGEMAGAFVAVFLLAMF. Residues 83 to 132 are Cytoplasmic-facing; it reads YEGLKIARESLLRKSQVSIRYNSMPVPGPNGTILMETHKTVGQQMLSFPH. Threonine 114 carries the post-translational modification Phosphothreonine. The helical transmembrane segment at 133-153 threads the bilayer; it reads LLQTVLHIIQVVISYFLMLIF. Over 154 to 156 the chain is Extracellular; the sequence is MTY. The chain crosses the membrane as a helical span at residues 157 to 177; it reads NGYLCIAVAAGAGTGYFLFSW. Residues 178–190 lie on the Cytoplasmic side of the membrane; the sequence is KKAVVVDITEHCH. Position 189 is a cysteine sulfenic acid (-SOH) (cysteine 189).

The protein belongs to the copper transporter (Ctr) (TC 1.A.56) family. SLC31A subfamily. In terms of assembly, homotrimer; is stabilized by cisplatin via interactions between cisplatin and the methionine-rich clusters, and could be crucial for the copper(2+) reduction process and copper(1+) stabilization. Heterotrimer between SLC31A1, CCS and SOD1; this heterotrimer is copper(1+)-mediated and its maintenance is regulated through SOD1 activation. Interacts with KDR; this interaction is induced upon VEGFA stimulation leading to SLC31A1 and KDR subsequent co-internalization to early endosomes, thereby activating KDR downstream signaling in endothelial cells. Interacts (via C-terminal domain) with ATOX1 (via dimer form); this interaction improves ATOX1 stability and controls intracellular copper(1+) levels. Interacts with SLC31A2; this interaction stabilizes SLC31A2 and protects its from ubiquitination and degradation. Interacts (via C-terminal domain) with CCS; this interaction is copper(1+)-mediated. O-Glycosylation at Thr-27 protects from proteolytic cleavage in the N-terminal extracellular domain. In terms of processing, proteolytic cleavage, leading to a truncated form, is facilitated by SLC31A2 and initiated preferentially by CTSL and to a minor extend by CTSB in endolysosomal compartments. In vitro, is cleaved by CTSL/cathepsin L between residues 8 and 9 from the amino terminus. A post-CTSL/cathepsin L processing occurs to yield to the fully truncated form. Post-translationally, sulfenylated at Cys-189 after stimulation with VEGFA, which induces SLC31A1-KDR disulfide bond formation and their co-internalization to early endosomes, driving to a sustained VEGFR2 signaling.

Its subcellular location is the cell membrane. The protein resides in the early endosome membrane. The protein localises to the recycling endosome membrane. It localises to the apical cell membrane. It is found in the late endosome membrane. Its subcellular location is the basolateral cell membrane. The enzyme catalyses Ag(+)(out) = Ag(+)(in). The catalysed reaction is Cu(+)(out) = Cu(+)(in). Its activity is regulated as follows. Copper(1+) transport is stimulated by extracellular acidic pH and high potassium ions concentrations. Copper(1+) import is regulated by a copper(1+)-dependent recycling of SLC31A1. Functionally, uniporter that mediates the transport of copper(1+) from the extracellular space to the cytoplasm, across the plasma membrane and delivers directly copper(1+) to specific chaperone such as ATOX1, via a copper(1+)- mediated transient interaction between the C-terminal domain and a copper(1+) chaperone, thus controlling intracellular copper(1+) levels. May function in copper(1+) import from the apical membrane thus may drive intestinal copper absorption. The copper(1+) transport mechanism is sodium-independent, saturable and of high-affinity. Also mediates the uptake of silver(1+). May function in the influx of the platinum-containing chemotherapeutic agents. The platinum-containing chemotherapeutic agents uptake is saturable. In vitro, mediates the transport of cadmium(2+) into cells. Also participates in the first step of copper(2+) acquisition by cells through a direct transfer of copper(2+) from copper(2+) carriers in blood, such as ALB to the N-terminal domain of SLC31A1, leading to copper(2+) reduction and probably followed by copper(1+) stabilization. In addition, functions as a redox sensor to promote angiogenesis in endothelial cells, in a copper(1+) transport independent manner, by transmitting the VEGF-induced ROS signal through a sulfenylation at Cys-189 leadin g to a subsequent disulfide bond formation between SLC31A1 and KDR. The SLC31A1-KDR complex is then co-internalized to early endosomes, driving a sustained VEGFR2 signaling. Mobilizes copper(1+) out of the endosomal compartment, making copper(1+) available for export out of the cells. The polypeptide is High affinity copper uptake protein 1 (Homo sapiens (Human)).